A 1024-amino-acid chain; its full sequence is Eukaryotic translation initiation factor 3 subunit A (1024 aa).

The PCI domain occupies 331-508 (VISSNAPGTG…QAITFQDDVF (178 aa)). Coiled-coil stretches lie at residues 575–717 (AAED…REEA) and 777–889 (KRRG…RRSR). Basic and acidic residues-rich tracts occupy residues 797-866 (KERR…ERRA) and 873-886 (DKQR…EANR). 2 disordered regions span residues 797 to 973 (KERR…GAYR) and 1001 to 1024 (AAAA…GRRA). 2 stretches are compositionally biased toward low complexity: residues 890–906 (AAGT…AADA) and 946–971 (KEAA…SSGA).

The protein belongs to the eIF-3 subunit A family. Component of the eukaryotic translation initiation factor 3 (eIF-3) complex.

The protein localises to the cytoplasm. In terms of biological role, RNA-binding component of the eukaryotic translation initiation factor 3 (eIF-3) complex, which is involved in protein synthesis of a specialized repertoire of mRNAs and, together with other initiation factors, stimulates binding of mRNA and methionyl-tRNAi to the 40S ribosome. The eIF-3 complex specifically targets and initiates translation of a subset of mRNAs involved in cell proliferation. This chain is Eukaryotic translation initiation factor 3 subunit A, found in Mycosarcoma maydis (Corn smut fungus).